Reading from the N-terminus, the 590-residue chain is V-type ATP synthase alpha chain (590 aa).

234–241 (GGFGAGKT) serves as a coordination point for ATP.

It belongs to the ATPase alpha/beta chains family.

The enzyme catalyses ATP + H2O + 4 H(+)(in) = ADP + phosphate + 5 H(+)(out). Produces ATP from ADP in the presence of a proton gradient across the membrane. The V-type alpha chain is a catalytic subunit. This chain is V-type ATP synthase alpha chain, found in Halothermothrix orenii (strain H 168 / OCM 544 / DSM 9562).